We begin with the raw amino-acid sequence, 120 residues long: NAD(P)H-quinone oxidoreductase subunit 3, chloroplastic (120 aa).

The next 3 membrane-spanning stretches (helical) occupy residues Phe-10–Val-30, Ile-64–Met-84, and Val-88–Ser-108.

This sequence belongs to the complex I subunit 3 family. In terms of assembly, NDH is composed of at least 16 different subunits, 5 of which are encoded in the nucleus.

Its subcellular location is the plastid. It localises to the chloroplast thylakoid membrane. It carries out the reaction a plastoquinone + NADH + (n+1) H(+)(in) = a plastoquinol + NAD(+) + n H(+)(out). The catalysed reaction is a plastoquinone + NADPH + (n+1) H(+)(in) = a plastoquinol + NADP(+) + n H(+)(out). In terms of biological role, NDH shuttles electrons from NAD(P)H:plastoquinone, via FMN and iron-sulfur (Fe-S) centers, to quinones in the photosynthetic chain and possibly in a chloroplast respiratory chain. The immediate electron acceptor for the enzyme in this species is believed to be plastoquinone. Couples the redox reaction to proton translocation, and thus conserves the redox energy in a proton gradient. This is NAD(P)H-quinone oxidoreductase subunit 3, chloroplastic from Pelargonium hortorum (Common geranium).